The following is a 500-amino-acid chain: Glutathione gamma-glutamylcysteinyltransferase 1 (500 aa).

The Peptidase C83 domain maps to 1-221; sequence MEVASLYRRV…GFMLVSRRSS (221 aa). Residues Cys-56, His-162, and Asp-180 contribute to the active site.

Belongs to the phytochelatin synthase family. In terms of tissue distribution, expressed in roots and shoots.

It carries out the reaction [Glu(-Cys)](n)-Gly + glutathione + H(+) = [Glu(-Cys)](n+1)-Gly + glycine. With respect to regulation, requires cadmium for activity. Functionally, involved in the synthesis of phytochelatins (PC) and homophytochelatins (hPC), the heavy-metal-binding peptides of plants. The sequence is that of Glutathione gamma-glutamylcysteinyltransferase 1 (PCS1) from Triticum aestivum (Wheat).